A 259-amino-acid polypeptide reads, in one-letter code: 3-dehydroquinate dehydratase (259 aa).

3-dehydroquinate is bound by residues 50-52 and Arg-86; that span reads EWR. Catalysis depends on His-147, which acts as the Proton donor/acceptor. Lys-174 serves as the catalytic Schiff-base intermediate with substrate. Arg-216, Ser-235, and Gln-239 together coordinate 3-dehydroquinate.

This sequence belongs to the type-I 3-dehydroquinase family. Homodimer.

It carries out the reaction 3-dehydroquinate = 3-dehydroshikimate + H2O. Its pathway is metabolic intermediate biosynthesis; chorismate biosynthesis; chorismate from D-erythrose 4-phosphate and phosphoenolpyruvate: step 3/7. In terms of biological role, involved in the third step of the chorismate pathway, which leads to the biosynthesis of aromatic amino acids. Catalyzes the cis-dehydration of 3-dehydroquinate (DHQ) and introduces the first double bond of the aromatic ring to yield 3-dehydroshikimate. In Geobacillus sp. (strain WCH70), this protein is 3-dehydroquinate dehydratase.